The sequence spans 122 residues: Large ribosomal subunit protein uL14c (122 aa).

This sequence belongs to the universal ribosomal protein uL14 family. In terms of assembly, part of the 50S ribosomal subunit.

It is found in the plastid. The protein localises to the chloroplast. Binds to 23S rRNA. In Nandina domestica (Heavenly bamboo), this protein is Large ribosomal subunit protein uL14c.